The following is a 469-amino-acid chain: Glutamate--tRNA ligase (469 aa).

The short motif at 11–21 (PSPTGFIHLGN) is the 'HIGH' region element. Basic and acidic residues predominate over residues 118-131 (GEKPRYDGTWRPEP). The disordered stretch occupies residues 118-138 (GEKPRYDGTWRPEPGKVLPEP). The 'KMSKS' region motif lies at 243-247 (KMSKR). Lys246 is an ATP binding site.

This sequence belongs to the class-I aminoacyl-tRNA synthetase family. Glutamate--tRNA ligase type 1 subfamily. Monomer.

The protein localises to the cytoplasm. It catalyses the reaction tRNA(Glu) + L-glutamate + ATP = L-glutamyl-tRNA(Glu) + AMP + diphosphate. Functionally, catalyzes the attachment of glutamate to tRNA(Glu) in a two-step reaction: glutamate is first activated by ATP to form Glu-AMP and then transferred to the acceptor end of tRNA(Glu). In Burkholderia vietnamiensis (strain G4 / LMG 22486) (Burkholderia cepacia (strain R1808)), this protein is Glutamate--tRNA ligase.